The following is a 290-amino-acid chain: Phosphoribulokinase 1 (290 aa).

Position 12–20 (12–20) interacts with ATP; that stretch reads GSSGAGTST.

Belongs to the phosphoribulokinase family. In terms of assembly, homooctamer.

It catalyses the reaction D-ribulose 5-phosphate + ATP = D-ribulose 1,5-bisphosphate + ADP + H(+). Its pathway is carbohydrate biosynthesis; Calvin cycle. With respect to regulation, activated by NADH and inhibited by phosphoenolpyruvate. This Cereibacter sphaeroides (Rhodobacter sphaeroides) protein is Phosphoribulokinase 1 (prkA).